The primary structure comprises 372 residues: Chaperone protein DnaJ (372 aa).

The region spanning 5 to 69 is the J domain; sequence DYYEVLGLSK…QKKAQYDQFG (65 aa). Residues 129–211 form a CR-type zinc finger; it reads GAEKEISVKK…CGGTGRKVKT (83 aa). 8 residues coordinate Zn(2+): C142, C145, C159, C162, C185, C188, C199, and C202. CXXCXGXG motif repeat units follow at residues 142–149, 159–166, 185–192, and 199–206; these read CDTCDGSG, CSTCGGRG, CPDCGGTG, and CSDCGGTG.

Belongs to the DnaJ family. In terms of assembly, homodimer. The cofactor is Zn(2+).

It localises to the cytoplasm. Participates actively in the response to hyperosmotic and heat shock by preventing the aggregation of stress-denatured proteins and by disaggregating proteins, also in an autonomous, DnaK-independent fashion. Unfolded proteins bind initially to DnaJ; upon interaction with the DnaJ-bound protein, DnaK hydrolyzes its bound ATP, resulting in the formation of a stable complex. GrpE releases ADP from DnaK; ATP binding to DnaK triggers the release of the substrate protein, thus completing the reaction cycle. Several rounds of ATP-dependent interactions between DnaJ, DnaK and GrpE are required for fully efficient folding. Also involved, together with DnaK and GrpE, in the DNA replication of plasmids through activation of initiation proteins. The protein is Chaperone protein DnaJ of Macrococcus caseolyticus (strain JCSC5402) (Macrococcoides caseolyticum).